Reading from the N-terminus, the 195-residue chain is 3-isopropylmalate dehydratase small subunit (195 aa).

The protein belongs to the LeuD family. LeuD type 1 subfamily. Heterodimer of LeuC and LeuD.

It catalyses the reaction (2R,3S)-3-isopropylmalate = (2S)-2-isopropylmalate. Its pathway is amino-acid biosynthesis; L-leucine biosynthesis; L-leucine from 3-methyl-2-oxobutanoate: step 2/4. Catalyzes the isomerization between 2-isopropylmalate and 3-isopropylmalate, via the formation of 2-isopropylmaleate. The sequence is that of 3-isopropylmalate dehydratase small subunit from Rubrobacter xylanophilus (strain DSM 9941 / JCM 11954 / NBRC 16129 / PRD-1).